A 383-amino-acid chain; its full sequence is MQTWQLPEHIADVLPTNARQLESAREQLLALFRVHGYELVQPPLMEYAHSLLTHIDAGLSLKTILVTDRLSGRQLGIRADITPQVARIDAHLLSANQGINRLCYAGPVLHAQSDGLLNMREPLQAGAEMYGFADIRGDIELIDLMLKSMKIADMGKVLLSLGHIGIFRALSDAAHLDAGQSATLLALMQDKDTETVEAQVKAWKLDGMWAKAFSLLPRLYGGREVLSDARGRLPDLSAVGGALGELQAVCDAFPDCEIHIDLSELRVDNYHTGLLYAAYAADFHDAVARGGRYDGLGGYFGRARPATGFSFDLRSFIGRLPAIERQPAVLVDAEDAEAAHEAVEALREQGQCVVIDYGIGHNVSEELAGRLKKTDGVWQVVKR.

The protein belongs to the class-II aminoacyl-tRNA synthetase family. HisZ subfamily. Heteromultimer composed of HisG and HisZ subunits.

The protein localises to the cytoplasm. It functions in the pathway amino-acid biosynthesis; L-histidine biosynthesis; L-histidine from 5-phospho-alpha-D-ribose 1-diphosphate: step 1/9. Its function is as follows. Required for the first step of histidine biosynthesis. May allow the feedback regulation of ATP phosphoribosyltransferase activity by histidine. In Neisseria meningitidis serogroup A / serotype 4A (strain DSM 15465 / Z2491), this protein is ATP phosphoribosyltransferase regulatory subunit (hisZ).